The following is a 438-amino-acid chain: Glucosamine kinase (438 aa).

Residues Lys133, 186–188 (AYL), and Asp193 each bind ATP. Asp300 contributes to the D-glucosamine binding site. 3 residues coordinate Mg(2+): Gln305, Asp317, and Asp319. The short motif at 405-420 (QEVREYLYAVRHLPHW) is the Substrate specificity determinant motif element. Glu409 is a D-glucosamine binding site.

The protein belongs to the actinobacterial glucosamine kinase family. As to quaternary structure, monomer. Requires Mg(2+) as cofactor.

The catalysed reaction is D-glucosamine + ATP = D-glucosamine 6-phosphate + ADP + H(+). Functionally, catalyzes the ATP-dependent phosphorylation of D-glucosamine (GlcN) to D-glucosamine 6-phosphate. May be involved in the phosphorylation of acquired extracellular GlcN derived from the hydrolysis of chitosan, i.e., in the incorporation of exogenous GlcN into the bacterial GlcNAc metabolism. To a lesser extent, is also active on glucose, but is unable to phosphorylate maltose, 18 other sugars and several aminoglycoside antibiotics. This is Glucosamine kinase from Streptacidiphilus jiangxiensis.